Consider the following 218-residue polypeptide: uncharacterized protein (218 aa).

The CN hydrolase domain maps to tryptophan 4–serine 207.

This is an uncharacterized protein from Escherichia coli (strain K12).